The following is a 240-amino-acid chain: Urease accessory protein UreD (240 aa).

It belongs to the UreD family. UreD, UreF and UreG form a complex that acts as a GTP-hydrolysis-dependent molecular chaperone, activating the urease apoprotein by helping to assemble the nickel containing metallocenter of UreC. The UreE protein probably delivers the nickel.

The protein localises to the cytoplasm. Its function is as follows. Required for maturation of urease via the functional incorporation of the urease nickel metallocenter. The protein is Urease accessory protein UreD of Granulibacter bethesdensis (strain ATCC BAA-1260 / CGDNIH1).